The sequence spans 195 residues: Imidazoleglycerol-phosphate dehydratase (195 aa).

Belongs to the imidazoleglycerol-phosphate dehydratase family.

It localises to the cytoplasm. It catalyses the reaction D-erythro-1-(imidazol-4-yl)glycerol 3-phosphate = 3-(imidazol-4-yl)-2-oxopropyl phosphate + H2O. Its pathway is amino-acid biosynthesis; L-histidine biosynthesis; L-histidine from 5-phospho-alpha-D-ribose 1-diphosphate: step 6/9. The protein is Imidazoleglycerol-phosphate dehydratase of Methylobacterium radiotolerans (strain ATCC 27329 / DSM 1819 / JCM 2831 / NBRC 15690 / NCIMB 10815 / 0-1).